The primary structure comprises 433 residues: 23S rRNA (uracil(1939)-C(5))-methyltransferase RlmD (433 aa).

The TRAM domain occupies 10 to 68 (RTTTRQIITVSVNDLDSFGQGVARHNGKTLFIPGLLPQENAEVAVTEDKKQYARAKVVR). Residues Cys81, Cys87, Cys90, and Cys162 each contribute to the [4Fe-4S] cluster site. Residues Gln265, Phe294, Asn299, Glu315, Asn342, and Asp363 each contribute to the S-adenosyl-L-methionine site. Cys389 (nucleophile) is an active-site residue.

Belongs to the class I-like SAM-binding methyltransferase superfamily. RNA M5U methyltransferase family. RlmD subfamily.

It carries out the reaction uridine(1939) in 23S rRNA + S-adenosyl-L-methionine = 5-methyluridine(1939) in 23S rRNA + S-adenosyl-L-homocysteine + H(+). In terms of biological role, catalyzes the formation of 5-methyl-uridine at position 1939 (m5U1939) in 23S rRNA. The chain is 23S rRNA (uracil(1939)-C(5))-methyltransferase RlmD from Shigella flexneri.